We begin with the raw amino-acid sequence, 528 residues long: Oxamate amidohydrolase proenzyme (528 aa).

The Nucleophile role is filled by Thr-342. 424–425 (GG) is a substrate binding site.

This sequence belongs to the gamma-glutamyltransferase family. Heterodimer that consists of a 35.5 kDa large (alpha) subunit and a 20 kDa small (beta) subunit, which are synthesized from a single polypeptide. Cleaved by autocatalysis into a large (alpha) and a small (beta) subunit.

The catalysed reaction is oxamate + H2O = oxalate + NH4(+). Involved in the uric acid degradation pathway. Catalyzes the conversion of oxamate to oxalate. This is Oxamate amidohydrolase proenzyme from Klebsiella pneumoniae subsp. pneumoniae (strain ATCC 700721 / MGH 78578).